A 193-amino-acid chain; its full sequence is Crossover junction endodeoxyribonuclease RuvC (193 aa).

Residues D7, E68, and D141 contribute to the active site. D7, E68, and D141 together coordinate Mg(2+).

It belongs to the RuvC family. As to quaternary structure, homodimer which binds Holliday junction (HJ) DNA. The HJ becomes 2-fold symmetrical on binding to RuvC with unstacked arms; it has a different conformation from HJ DNA in complex with RuvA. In the full resolvosome a probable DNA-RuvA(4)-RuvB(12)-RuvC(2) complex forms which resolves the HJ. Mg(2+) is required as a cofactor.

The protein localises to the cytoplasm. The catalysed reaction is Endonucleolytic cleavage at a junction such as a reciprocal single-stranded crossover between two homologous DNA duplexes (Holliday junction).. In terms of biological role, the RuvA-RuvB-RuvC complex processes Holliday junction (HJ) DNA during genetic recombination and DNA repair. Endonuclease that resolves HJ intermediates. Cleaves cruciform DNA by making single-stranded nicks across the HJ at symmetrical positions within the homologous arms, yielding a 5'-phosphate and a 3'-hydroxyl group; requires a central core of homology in the junction. The consensus cleavage sequence is 5'-(A/T)TT(C/G)-3'. Cleavage occurs on the 3'-side of the TT dinucleotide at the point of strand exchange. HJ branch migration catalyzed by RuvA-RuvB allows RuvC to scan DNA until it finds its consensus sequence, where it cleaves and resolves the cruciform DNA. The chain is Crossover junction endodeoxyribonuclease RuvC from Bifidobacterium adolescentis (strain ATCC 15703 / DSM 20083 / NCTC 11814 / E194a).